Consider the following 445-residue polypeptide: Phosphoglucosamine mutase 1 (445 aa).

The active-site Phosphoserine intermediate is serine 102. Residues serine 102, aspartate 241, aspartate 243, and aspartate 245 each contribute to the Mg(2+) site. At serine 102 the chain carries Phosphoserine.

It belongs to the phosphohexose mutase family. Requires Mg(2+) as cofactor. Post-translationally, activated by phosphorylation.

It carries out the reaction alpha-D-glucosamine 1-phosphate = D-glucosamine 6-phosphate. Catalyzes the conversion of glucosamine-6-phosphate to glucosamine-1-phosphate. The chain is Phosphoglucosamine mutase 1 from Shewanella sp. (strain MR-7).